We begin with the raw amino-acid sequence, 355 residues long: uncharacterized protein (355 aa).

Residues Met1–Val49 constitute a chloroplast transit peptide.

The protein belongs to the methyltransferase superfamily.

It localises to the plastid. Its subcellular location is the chloroplast. The protein localises to the plastoglobule. This is an uncharacterized protein from Arabidopsis thaliana (Mouse-ear cress).